The sequence spans 368 residues: Phospho-N-acetylmuramoyl-pentapeptide-transferase (368 aa).

10 helical membrane passes run 2 to 22 (IALI…TPLL), 51 to 71 (TLGG…SALY), 80 to 100 (PTWA…LGFI), 116 to 136 (VGGK…LALI), 166 to 186 (IVAI…WTNA), 193 to 213 (LDGL…IIAM), 234 to 254 (PLDL…FLWY), 256 to 276 (CNPA…GLFA), 277 to 297 (ALSI…LFVV), and 340 to 360 (FWIV…GNWV).

Belongs to the glycosyltransferase 4 family. MraY subfamily. Mg(2+) serves as cofactor.

It localises to the cell membrane. It catalyses the reaction UDP-N-acetyl-alpha-D-muramoyl-L-alanyl-gamma-D-glutamyl-meso-2,6-diaminopimeloyl-D-alanyl-D-alanine + di-trans,octa-cis-undecaprenyl phosphate = di-trans,octa-cis-undecaprenyl diphospho-N-acetyl-alpha-D-muramoyl-L-alanyl-D-glutamyl-meso-2,6-diaminopimeloyl-D-alanyl-D-alanine + UMP. Its pathway is cell wall biogenesis; peptidoglycan biosynthesis. Its function is as follows. Catalyzes the initial step of the lipid cycle reactions in the biosynthesis of the cell wall peptidoglycan: transfers peptidoglycan precursor phospho-MurNAc-pentapeptide from UDP-MurNAc-pentapeptide onto the lipid carrier undecaprenyl phosphate, yielding undecaprenyl-pyrophosphoryl-MurNAc-pentapeptide, known as lipid I. In Bifidobacterium animalis subsp. lactis (strain AD011), this protein is Phospho-N-acetylmuramoyl-pentapeptide-transferase.